A 521-amino-acid chain; its full sequence is Bifunctional purine biosynthesis protein PurH (521 aa).

Residues 1–147 (MAKITRALIS…KNNADVTVVV (147 aa)) enclose the MGS-like domain.

It belongs to the PurH family.

It catalyses the reaction (6R)-10-formyltetrahydrofolate + 5-amino-1-(5-phospho-beta-D-ribosyl)imidazole-4-carboxamide = 5-formamido-1-(5-phospho-D-ribosyl)imidazole-4-carboxamide + (6S)-5,6,7,8-tetrahydrofolate. It carries out the reaction IMP + H2O = 5-formamido-1-(5-phospho-D-ribosyl)imidazole-4-carboxamide. It functions in the pathway purine metabolism; IMP biosynthesis via de novo pathway; 5-formamido-1-(5-phospho-D-ribosyl)imidazole-4-carboxamide from 5-amino-1-(5-phospho-D-ribosyl)imidazole-4-carboxamide (10-formyl THF route): step 1/1. It participates in purine metabolism; IMP biosynthesis via de novo pathway; IMP from 5-formamido-1-(5-phospho-D-ribosyl)imidazole-4-carboxamide: step 1/1. This Geobacter metallireducens (strain ATCC 53774 / DSM 7210 / GS-15) protein is Bifunctional purine biosynthesis protein PurH.